Consider the following 204-residue polypeptide: MILGIDEAGRGCLAGSLFVAGVACNDQTALELLKMGLKDSKKLSLKKRFFLEDKIKTHGKVKFFVVKKSANEIDNLGLGACLKLAIQEILENNRSLANEIKIDGNTAFGLNKRYPNIQTIIKGDETIAQIAMASVLAKAFKDREMLELHALFKEYGWDKNCGYGTKQHIEAITKLGATPFHRHSFTLKNCILNPKLLEVEQRLI.

Residues 1–197 (MILGIDEAGR…KNCILNPKLL (197 aa)) enclose the RNase H type-2 domain. Asp-6, Glu-7, and Asp-103 together coordinate a divalent metal cation.

It belongs to the RNase HII family. Requires Mn(2+) as cofactor. It depends on Mg(2+) as a cofactor.

It is found in the cytoplasm. It catalyses the reaction Endonucleolytic cleavage to 5'-phosphomonoester.. Its function is as follows. Endonuclease that specifically degrades the RNA of RNA-DNA hybrids. This chain is Ribonuclease HII, found in Helicobacter pylori (strain P12).